Reading from the N-terminus, the 372-residue chain is tRNA 2-selenouridine synthase (372 aa).

The region spanning 19-142 is the Rhodanese domain; sequence LASGHPIMDV…MRQYLIDTID (124 aa). C102 acts as the S-selanylcysteine intermediate in catalysis.

The protein belongs to the SelU family. In terms of assembly, monomer.

It carries out the reaction 5-methylaminomethyl-2-thiouridine(34) in tRNA + selenophosphate + (2E)-geranyl diphosphate + H2O + H(+) = 5-methylaminomethyl-2-selenouridine(34) in tRNA + (2E)-thiogeraniol + phosphate + diphosphate. The enzyme catalyses 5-methylaminomethyl-2-thiouridine(34) in tRNA + (2E)-geranyl diphosphate = 5-methylaminomethyl-S-(2E)-geranyl-thiouridine(34) in tRNA + diphosphate. The catalysed reaction is 5-methylaminomethyl-S-(2E)-geranyl-thiouridine(34) in tRNA + selenophosphate + H(+) = 5-methylaminomethyl-2-(Se-phospho)selenouridine(34) in tRNA + (2E)-thiogeraniol. It catalyses the reaction 5-methylaminomethyl-2-(Se-phospho)selenouridine(34) in tRNA + H2O = 5-methylaminomethyl-2-selenouridine(34) in tRNA + phosphate. Functionally, involved in the post-transcriptional modification of the uridine at the wobble position (U34) of tRNA(Lys), tRNA(Glu) and tRNA(Gln). Catalyzes the conversion of 2-thiouridine (S2U-RNA) to 2-selenouridine (Se2U-RNA). Acts in a two-step process involving geranylation of 2-thiouridine (S2U) to S-geranyl-2-thiouridine (geS2U) and subsequent selenation of the latter derivative to 2-selenouridine (Se2U) in the tRNA chain. This Shewanella loihica (strain ATCC BAA-1088 / PV-4) protein is tRNA 2-selenouridine synthase.